The following is a 380-amino-acid chain: Cytochrome b (380 aa).

4 helical membrane passes run leucine 33 to methionine 53, tryptophan 77 to isoleucine 98, tryptophan 113 to leucine 133, and phenylalanine 178 to leucine 198. Histidine 83 and histidine 97 together coordinate heme b. Positions 182 and 196 each coordinate heme b. A ubiquinone is bound at residue histidine 201. 4 helical membrane passes run threonine 226–serine 246, leucine 288–histidine 308, leucine 320–glycine 340, and phenylalanine 347–proline 367.

It belongs to the cytochrome b family. In terms of assembly, the cytochrome bc1 complex contains 11 subunits: 3 respiratory subunits (MT-CYB, CYC1 and UQCRFS1), 2 core proteins (UQCRC1 and UQCRC2) and 6 low-molecular weight proteins (UQCRH/QCR6, UQCRB/QCR7, UQCRQ/QCR8, UQCR10/QCR9, UQCR11/QCR10 and a cleavage product of UQCRFS1). This cytochrome bc1 complex then forms a dimer. Heme b serves as cofactor.

It localises to the mitochondrion inner membrane. Component of the ubiquinol-cytochrome c reductase complex (complex III or cytochrome b-c1 complex) that is part of the mitochondrial respiratory chain. The b-c1 complex mediates electron transfer from ubiquinol to cytochrome c. Contributes to the generation of a proton gradient across the mitochondrial membrane that is then used for ATP synthesis. This is Cytochrome b (MT-CYB) from Nomascus leucogenys (Northern white-cheeked gibbon).